The following is an 88-amino-acid chain: Large ribosomal subunit protein bL27 (88 aa).

Polar residues predominate over residues 1-13 (MATKKGASSSSNG). The interval 1–25 (MATKKGASSSSNGRDSEAKRLGVKR) is disordered.

This sequence belongs to the bacterial ribosomal protein bL27 family.

This is Large ribosomal subunit protein bL27 from Corynebacterium efficiens (strain DSM 44549 / YS-314 / AJ 12310 / JCM 11189 / NBRC 100395).